Reading from the N-terminus, the 611-residue chain is MFS siderochrome iron transporter C (611 aa).

A disordered region spans residues 1 to 25 (MPFLDHRTGPSYGTIDQMEQHSDDE). Asn62 carries an N-linked (GlcNAc...) asparagine glycan. The next 14 membrane-spanning stretches (helical) occupy residues 71–91 (VIAYVSIFLMSFCTSLEGQTV), 107–127 (LISTVLVVQNVVNAVIKPPMA), 136–156 (FEAFCVSILIYVLGYIQMAAS), 165–185 (AQIFYSAGSTGLQILQQVFIA), 194–214 (AFLALLPEFPFLVTVWIGPTI), 228–248 (YGMWSIILPASFLPLALSLLL), 282–302 (MGGLILLSAAVTLILVPLTLA), 313–333 (SIVAMIVVGLFCLIALPFWES), 353–373 (ALAGCTLAFWYFMAFYFSVQP), 393–413 (VTQTFAFTSTIAAFAVSILIK), 418–438 (YRAFVIAGCVVYIIGMVLMMV), 449–469 (ILVTQVVVGIGGGLLNVPVQL), 486–506 (MFLTSMEMGGAVGAALSGAVW), and 560–580 (LLILALIAIIPLVPLSLAMED). Positions 592–611 (VDPVPAEEGEIEPNRHVKRT) are disordered.

The protein belongs to the major facilitator superfamily.

It localises to the membrane. Functionally, major facilitator transporter that contributes to the maintenance of intracellular siderophore ferricrocin (FC) levels. Plays a role in conidiation and confers protection against oxidative stress. Also contributes to fungal virulence in the Galleria mellonella animal model system. Does not appear to play a role in either siderophore export or uptake. The sequence is that of MFS siderochrome iron transporter C from Aspergillus fumigatus (strain ATCC MYA-4609 / CBS 101355 / FGSC A1100 / Af293) (Neosartorya fumigata).